A 498-amino-acid polypeptide reads, in one-letter code: Serine hydroxymethyltransferase, mitochondrial (498 aa).

An N6-(pyridoxal phosphate)lysine modification is found at Lys273.

It belongs to the SHMT family. In terms of assembly, homotetramer. It depends on pyridoxal 5'-phosphate as a cofactor.

Its subcellular location is the mitochondrion. The enzyme catalyses (6R)-5,10-methylene-5,6,7,8-tetrahydrofolate + glycine + H2O = (6S)-5,6,7,8-tetrahydrofolate + L-serine. It functions in the pathway one-carbon metabolism; tetrahydrofolate interconversion. Its function is as follows. Interconversion of serine and glycine. This is Serine hydroxymethyltransferase, mitochondrial (SHM1) from Kluyveromyces lactis (strain ATCC 8585 / CBS 2359 / DSM 70799 / NBRC 1267 / NRRL Y-1140 / WM37) (Yeast).